A 1187-amino-acid chain; its full sequence is BAI1-associated protein 3 (1187 aa).

A disordered region spans residues 55 to 81 (SFRRRTEQDPGSASADPQEPATGAWKP). The C2 1 domain maps to 176–335 (SLEEHTEAIE…VKSARANGTA (160 aa)). The Ca(2+) site is built by Asp211, Asp217, Asp295, and Asp297. The region spanning 663 to 784 (FELYLTLADL…EATLFYTELL (122 aa)) is the MHD1 domain. Positions 888–996 (DEAVAPLMKY…CSTRECIEQF (109 aa)) constitute an MHD2 domain. The C2 2 domain maps to 1010 to 1136 (RFGRLSVRCH…GVARPQVGGG (127 aa)). Ca(2+) contacts are provided by Leu1040, Asp1041, Asp1047, Asp1105, Asp1107, Ser1110, and Asp1113.

This sequence belongs to the unc-13 family. Interacts with ADGRB1; this interaction is direct. Interacts with endosomal SNARE proteins VAMP3, VAMP4, STX6 and STX16; this interaction is increased in the presence of calcium. It depends on Ca(2+) as a cofactor. Predominantly expressed in brain. Also expressed in nonneural tissues such as breast and testes epithelium.

The protein resides in the cytoplasm. It localises to the cytosol. Its subcellular location is the recycling endosome membrane. It is found in the late endosome membrane. The protein localises to the golgi apparatus. The protein resides in the trans-Golgi network membrane. It localises to the cell membrane. Its function is as follows. Functions in endosome to Golgi retrograde transport. In response to calcium influx, may interact with SNARE fusion receptors and membrane phospholipids to mediate endosome fusion with the trans-Golgi network. By promoting the recycling of secretory vesicle transmembrane proteins, it indirectly controls dense-core secretory vesicle biogenesis, maturation and their ability to mediate the constitutive and regulated secretion of neurotransmitters and hormones. May regulate behavior and food intake by controlling calcium-stimulated exocytosis of neurotransmitters including NPY and serotonin and hormones like insulin. Proposed to play a role in hypothalamic neuronal firing by modulating gamma-aminobutyric acid (GABA)ergic inhibitory neurotransmission. This chain is BAI1-associated protein 3, found in Homo sapiens (Human).